Here is a 541-residue protein sequence, read N- to C-terminus: Propionyl-CoA carboxylase beta chain, mitochondrial (541 aa).

The transit peptide at 1–28 directs the protein to the mitochondrion; that stretch reads MAAVIRIRAMAAGTRLRVLNCGLGTTIR. Residues 34-292 enclose the CoA carboxyltransferase N-terminal domain; it reads PVSVNERIEN…SNQDPASIRE (259 aa). A carboxyltransferase region spans residues 34–535; it reads PVSVNERIEN…SKKVHRPWRK (502 aa). Ser73 is modified (phosphoserine). Lys101 bears the N6-acetyllysine; alternate mark. An N6-succinyllysine; alternate modification is found at Lys101. Lys250 is subject to N6-succinyllysine. The 240-residue stretch at 296–535 folds into the CoA carboxyltransferase C-terminal domain; that stretch reads PSDRLVPELD…SKKVHRPWRK (240 aa). An acyl-CoA binding region spans residues 327-360; it reads DEREFFEIMPNYAKNIVIGFARMNGRTVGIVGNQ. 2 positions are modified to N6-acetyllysine; alternate: Lys476 and Lys491. 2 positions are modified to N6-succinyllysine; alternate: Lys476 and Lys491.

This sequence belongs to the AccD/PCCB family. As to quaternary structure, the holoenzyme is a dodecamer composed of 6 PCCA/alpha subunits and 6 PCCB/beta subunits.

The protein localises to the mitochondrion matrix. The catalysed reaction is propanoyl-CoA + hydrogencarbonate + ATP = (S)-methylmalonyl-CoA + ADP + phosphate + H(+). It catalyses the reaction butanoyl-CoA + hydrogencarbonate + ATP = (2S)-ethylmalonyl-CoA + ADP + phosphate + H(+). It functions in the pathway metabolic intermediate metabolism; propanoyl-CoA degradation; succinyl-CoA from propanoyl-CoA: step 1/3. This is one of the 2 subunits of the biotin-dependent propionyl-CoA carboxylase (PCC), a mitochondrial enzyme involved in the catabolism of odd chain fatty acids, branched-chain amino acids isoleucine, threonine, methionine, and valine and other metabolites. Propionyl-CoA carboxylase catalyzes the carboxylation of propionyl-CoA/propanoyl-CoA to D-methylmalonyl-CoA/(S)-methylmalonyl-CoA. Within the holoenzyme, the alpha subunit catalyzes the ATP-dependent carboxylation of the biotin carried by the biotin carboxyl carrier (BCC) domain, while the beta subunit then transfers the carboxyl group from carboxylated biotin to propionyl-CoA. Propionyl-CoA carboxylase also significantly acts on butyryl-CoA/butanoyl-CoA, which is converted to ethylmalonyl-CoA/(2S)-ethylmalonyl-CoA. Other alternative minor substrates include (2E)-butenoyl-CoA/crotonoyl-CoA. This chain is Propionyl-CoA carboxylase beta chain, mitochondrial, found in Rattus norvegicus (Rat).